Here is a 288-residue protein sequence, read N- to C-terminus: Bifunctional protein FolD (288 aa).

NADP(+)-binding positions include glycine 166–serine 168 and isoleucine 232.

The protein belongs to the tetrahydrofolate dehydrogenase/cyclohydrolase family. Homodimer.

The enzyme catalyses (6R)-5,10-methylene-5,6,7,8-tetrahydrofolate + NADP(+) = (6R)-5,10-methenyltetrahydrofolate + NADPH. It carries out the reaction (6R)-5,10-methenyltetrahydrofolate + H2O = (6R)-10-formyltetrahydrofolate + H(+). It participates in one-carbon metabolism; tetrahydrofolate interconversion. Catalyzes the oxidation of 5,10-methylenetetrahydrofolate to 5,10-methenyltetrahydrofolate and then the hydrolysis of 5,10-methenyltetrahydrofolate to 10-formyltetrahydrofolate. The protein is Bifunctional protein FolD of Yersinia pseudotuberculosis serotype O:1b (strain IP 31758).